A 248-amino-acid polypeptide reads, in one-letter code: tRNA pseudouridine synthase A (248 aa).

Catalysis depends on Asp53, which acts as the Nucleophile. Residue Tyr111 participates in substrate binding.

Belongs to the tRNA pseudouridine synthase TruA family. As to quaternary structure, homodimer.

The catalysed reaction is uridine(38/39/40) in tRNA = pseudouridine(38/39/40) in tRNA. In terms of biological role, formation of pseudouridine at positions 38, 39 and 40 in the anticodon stem and loop of transfer RNAs. The polypeptide is tRNA pseudouridine synthase A (Streptococcus thermophilus (strain CNRZ 1066)).